The primary structure comprises 283 residues: MAFTRRLLGHGVGLRAKHFAEHLAVEPPVDWVEAISENFMAPGGRPLAVLEKVRRDVPVVLHGVSLSIGSTDPLSERYLALLTDLTSRIEPAWISDHLCWGSHGGRYAHDLWPLPYTEEALRHVVRRILRVQEVLGRQLLLENVSSYVAFRASEMPEWEFLAEVARRADCGILLDVNNVYVSARNHGFDPYAYLAALPASRIGQIHLAGHSDKGRYLLDTHGEEVPAAVWELYAETVRRFGRISTLIEWDDHVPPLGRLVQESRRAAEVEAAALAALQQGALP.

The protein belongs to the UPF0276 family.

This is UPF0276 protein Anae109_1558 from Anaeromyxobacter sp. (strain Fw109-5).